The primary structure comprises 136 residues: MLQPKRTKFRKVHKGRNRGIASGTEVSFGTYGLKAVGRCRLTARQIEAARRAMSRAVKRQGKIWIRVFPDKPITEKPLEVRMGKGKGNVEYWVALIQPGKVLYEMDGVSEEVARNAFALAAAKLPVKTTFVTKTVM.

Belongs to the universal ribosomal protein uL16 family. As to quaternary structure, part of the 50S ribosomal subunit.

Binds 23S rRNA and is also seen to make contacts with the A and possibly P site tRNAs. The protein is Large ribosomal subunit protein uL16 of Haemophilus influenzae (strain 86-028NP).